Consider the following 71-residue polypeptide: Small ribosomal subunit protein bS21 (71 aa).

The tract at residues 39 to 71 is disordered; that stretch reads EKPTTVRKRAKAAAQKRHAKKLARENARRVRLY. Residues 43 to 59 are compositionally biased toward basic residues; that stretch reads TVRKRAKAAAQKRHAKK. Residues 60 to 71 show a composition bias toward basic and acidic residues; it reads LARENARRVRLY.

This sequence belongs to the bacterial ribosomal protein bS21 family.

The protein is Small ribosomal subunit protein bS21 of Vibrio atlanticus (strain LGP32) (Vibrio splendidus (strain Mel32)).